Consider the following 547-residue polypeptide: DEAD-box ATP-dependent RNA helicase 31 (547 aa).

Residues 1–34 (MFDFGLSEDDSELGEVDEDDGPSGFEDDLFDDEG) show a composition bias toward acidic residues. The segment at 1-74 (MFDFGLSEDD…HTRESGGGDS (74 aa)) is disordered. Residues 53 to 70 (IKGEPIDQEGVVHTRESG) are compositionally biased toward basic and acidic residues. Residues 79–107 (TRFDECSLSPLTLKGVKAAGYERMTAVQE) carry the Q motif motif. The 184-residue stretch at 110–293 (LPIILKGKDV…HIAMKRDLEF (184 aa)) folds into the Helicase ATP-binding domain. 123 to 130 (AKTGTGKT) lines the ATP pocket. The DEAD box signature appears at 241 to 244 (DEAD). The region spanning 327–478 (LLTDHISENV…TKRKVEKALA (152 aa)) is the Helicase C-terminal domain.

The protein belongs to the DEAD box helicase family.

The catalysed reaction is ATP + H2O = ADP + phosphate + H(+). In Oryza sativa subsp. japonica (Rice), this protein is DEAD-box ATP-dependent RNA helicase 31.